The following is a 456-amino-acid chain: Bifunctional protein GlmU (456 aa).

The pyrophosphorylase stretch occupies residues methionine 1–lysine 228. UDP-N-acetyl-alpha-D-glucosamine-binding positions include leucine 11–glycine 14, lysine 25, glutamine 75, glycine 80–threonine 81, tyrosine 102–aspartate 104, glycine 138, glutamate 153, asparagine 168, and asparagine 226. Aspartate 104 contributes to the Mg(2+) binding site. Position 226 (asparagine 226) interacts with Mg(2+). The linker stretch occupies residues arginine 229–alanine 249. Positions glycine 250–glutamine 456 are N-acetyltransferase. The UDP-N-acetyl-alpha-D-glucosamine site is built by arginine 332 and lysine 350. The active-site Proton acceptor is histidine 362. Residues tyrosine 365 and asparagine 376 each coordinate UDP-N-acetyl-alpha-D-glucosamine. Residues alanine 379, asparagine 385–tyrosine 386, serine 404, alanine 422, and arginine 439 contribute to the acetyl-CoA site.

The protein in the N-terminal section; belongs to the N-acetylglucosamine-1-phosphate uridyltransferase family. It in the C-terminal section; belongs to the transferase hexapeptide repeat family. Homotrimer. It depends on Mg(2+) as a cofactor.

It localises to the cytoplasm. It carries out the reaction alpha-D-glucosamine 1-phosphate + acetyl-CoA = N-acetyl-alpha-D-glucosamine 1-phosphate + CoA + H(+). The catalysed reaction is N-acetyl-alpha-D-glucosamine 1-phosphate + UTP + H(+) = UDP-N-acetyl-alpha-D-glucosamine + diphosphate. The protein operates within nucleotide-sugar biosynthesis; UDP-N-acetyl-alpha-D-glucosamine biosynthesis; N-acetyl-alpha-D-glucosamine 1-phosphate from alpha-D-glucosamine 6-phosphate (route II): step 2/2. It functions in the pathway nucleotide-sugar biosynthesis; UDP-N-acetyl-alpha-D-glucosamine biosynthesis; UDP-N-acetyl-alpha-D-glucosamine from N-acetyl-alpha-D-glucosamine 1-phosphate: step 1/1. Its pathway is bacterial outer membrane biogenesis; LPS lipid A biosynthesis. Functionally, catalyzes the last two sequential reactions in the de novo biosynthetic pathway for UDP-N-acetylglucosamine (UDP-GlcNAc). The C-terminal domain catalyzes the transfer of acetyl group from acetyl coenzyme A to glucosamine-1-phosphate (GlcN-1-P) to produce N-acetylglucosamine-1-phosphate (GlcNAc-1-P), which is converted into UDP-GlcNAc by the transfer of uridine 5-monophosphate (from uridine 5-triphosphate), a reaction catalyzed by the N-terminal domain. This chain is Bifunctional protein GlmU, found in Neisseria gonorrhoeae (strain ATCC 700825 / FA 1090).